Reading from the N-terminus, the 316-residue chain is 4-hydroxy-3-methylbut-2-enyl diphosphate reductase (316 aa).

[4Fe-4S] cluster is bound at residue Cys12. His43 and His81 together coordinate (2E)-4-hydroxy-3-methylbut-2-enyl diphosphate. Residues His43 and His81 each coordinate dimethylallyl diphosphate. 2 residues coordinate isopentenyl diphosphate: His43 and His81. Cys103 contributes to the [4Fe-4S] cluster binding site. (2E)-4-hydroxy-3-methylbut-2-enyl diphosphate is bound at residue His131. His131 lines the dimethylallyl diphosphate pocket. His131 serves as a coordination point for isopentenyl diphosphate. The active-site Proton donor is the Glu133. Thr170 is a binding site for (2E)-4-hydroxy-3-methylbut-2-enyl diphosphate. A [4Fe-4S] cluster-binding site is contributed by Cys198. The (2E)-4-hydroxy-3-methylbut-2-enyl diphosphate site is built by Ser226, Asn228, and Ser271. The dimethylallyl diphosphate site is built by Ser226, Asn228, and Ser271. The isopentenyl diphosphate site is built by Ser226, Asn228, and Ser271.

The protein belongs to the IspH family. The cofactor is [4Fe-4S] cluster.

The enzyme catalyses isopentenyl diphosphate + 2 oxidized [2Fe-2S]-[ferredoxin] + H2O = (2E)-4-hydroxy-3-methylbut-2-enyl diphosphate + 2 reduced [2Fe-2S]-[ferredoxin] + 2 H(+). It carries out the reaction dimethylallyl diphosphate + 2 oxidized [2Fe-2S]-[ferredoxin] + H2O = (2E)-4-hydroxy-3-methylbut-2-enyl diphosphate + 2 reduced [2Fe-2S]-[ferredoxin] + 2 H(+). Its pathway is isoprenoid biosynthesis; dimethylallyl diphosphate biosynthesis; dimethylallyl diphosphate from (2E)-4-hydroxy-3-methylbutenyl diphosphate: step 1/1. The protein operates within isoprenoid biosynthesis; isopentenyl diphosphate biosynthesis via DXP pathway; isopentenyl diphosphate from 1-deoxy-D-xylulose 5-phosphate: step 6/6. Catalyzes the conversion of 1-hydroxy-2-methyl-2-(E)-butenyl 4-diphosphate (HMBPP) into a mixture of isopentenyl diphosphate (IPP) and dimethylallyl diphosphate (DMAPP). Acts in the terminal step of the DOXP/MEP pathway for isoprenoid precursor biosynthesis. This is 4-hydroxy-3-methylbut-2-enyl diphosphate reductase from Bacillus cereus (strain B4264).